The chain runs to 401 residues: Tumor necrosis factor receptor superfamily member 11B (401 aa).

An N-terminal signal peptide occupies residues 1–21 (MNKWLCCALLVLLDIIEWTTQ). TNFR-Cys repeat units follow at residues 24 to 62 (LPPKYLHYDPETGHQLLCDKCAPGTYLKQHCTVRRKTLC), 65 to 105 (CPDH…NRVC), 107 to 142 (CEEGRYLEIEFCLKHRSCPPGSGVVQAGTPERNTVC), and 145 to 185 (CPDG…DNVC). Cystine bridges form between C41–C54, C44–C62, C65–C80, C83–C97, C87–C105, C107–C118, C124–C142, and C145–C160. An N-linked (GlcNAc...) asparagine glycan is attached at N98. N-linked (GlcNAc...) asparagine glycosylation is found at N165 and N178. C166 and C185 form a disulfide bridge. Death domains lie at 198 to 269 (DVTL…MVKK) and 283 to 365 (RHLG…THSL). The N-linked (GlcNAc...) asparagine glycan is linked to N289.

Homodimer. Interacts with TNFSF10 and TNFSF11. As to expression, highly expressed in liver, lung, stomach, intestines and calvaria. Highly expressed in decidua and placenta, and in embryo.

The protein localises to the secreted. In terms of biological role, acts as a decoy receptor for TNFSF11/RANKL and thereby neutralizes its function in osteoclastogenesis. Inhibits the activation of osteoclasts and promotes osteoclast apoptosis in vitro. Bone homeostasis seems to depend on the local ratio between TNFSF11 and TNFRSF11B. May also play a role in preventing arterial calcification. May act as decoy receptor for TNFSF10/TRAIL and protect against apoptosis. TNFSF10/TRAIL binding blocks the inhibition of osteoclastogenesis. This chain is Tumor necrosis factor receptor superfamily member 11B (Tnfrsf11b), found in Mus musculus (Mouse).